A 318-amino-acid polypeptide reads, in one-letter code: Ferrochelatase (318 aa).

Positions 186 and 264 each coordinate Fe cation.

The protein belongs to the ferrochelatase family.

It is found in the cytoplasm. The catalysed reaction is heme b + 2 H(+) = protoporphyrin IX + Fe(2+). It participates in porphyrin-containing compound metabolism; protoheme biosynthesis; protoheme from protoporphyrin-IX: step 1/1. Catalyzes the ferrous insertion into protoporphyrin IX. This Chlamydia felis (strain Fe/C-56) (Chlamydophila felis) protein is Ferrochelatase.